Here is a 261-residue protein sequence, read N- to C-terminus: Indole-3-glycerol phosphate synthase (261 aa).

This sequence belongs to the TrpC family.

The catalysed reaction is 1-(2-carboxyphenylamino)-1-deoxy-D-ribulose 5-phosphate + H(+) = (1S,2R)-1-C-(indol-3-yl)glycerol 3-phosphate + CO2 + H2O. It functions in the pathway amino-acid biosynthesis; L-tryptophan biosynthesis; L-tryptophan from chorismate: step 4/5. The protein is Indole-3-glycerol phosphate synthase of Burkholderia vietnamiensis (strain G4 / LMG 22486) (Burkholderia cepacia (strain R1808)).